A 271-amino-acid polypeptide reads, in one-letter code: Collectin-11 (271 aa).

The N-terminal stretch at 1–25 (MVGEKLVAYMLVSVLGLALLRSVFG) is a signal peptide. The 60-residue stretch at 44–103 (GEAGEKGEKGAPGRPGRVGPTGEQGPPGDKGQKGSPGRYGKMGPTGPKGLKGDMGDPGPK) folds into the Collagen-like domain. Residues 46–112 (AGEKGEKGAP…KGPNGEPGVP (67 aa)) are disordered. Residues 124-148 (EMDIQVVQLTNELKFIKNAVAGIKE) are a coiled coil. The region spanning 149 to 265 (TDSKVYLLVK…CQLTMYFVCE (117 aa)) is the C-type lectin domain. Disulfide bonds link C170/C264 and C242/C256. R200 is a binding site for a carbohydrate. D207, E211, E232, N234, N235, D238, E240, and D241 together coordinate Ca(2+). Residue E240 coordinates a carbohydrate. Residues E244 and 252–254 (IDV) contribute to the a carbohydrate site. Residue D253 participates in Ca(2+) binding.

It belongs to the COLEC10/COLEC11 family. Homotrimer; disulfide-linked. Interacts with MASP1; probably triggers the lectin pathway of complement.

It localises to the secreted. Functionally, lectin that plays a role in innate immunity, apoptosis and embryogenesis. Calcium-dependent lectin that binds self and non-self glycoproteins presenting high mannose oligosaccharides with at least one terminal alpha-1,2-linked mannose epitope. Primarily recognizes the terminal disaccharide of the glycan. Also recognizes a subset of fucosylated glycans and lipopolysaccharides. Plays a role in innate immunity through its ability to bind non-self sugars presented by microorganisms and to activate the complement through the recruitment of MAPS1. Also plays a role in apoptosis through its ability to bind in a calcium-independent manner the DNA present at the surface of apoptotic cells and to activate the complement in response to this binding. Finally, plays a role in development, probably serving as a guidance cue during the migration of neural crest cells and other cell types during embryogenesis. This is Collectin-11 (colec11) from Danio rerio (Zebrafish).